A 341-amino-acid polypeptide reads, in one-letter code: Ribosomal RNA small subunit methyltransferase H (341 aa).

S-adenosyl-L-methionine-binding positions include G47–Y49, D64, F91, D109, and Q116.

The protein belongs to the methyltransferase superfamily. RsmH family.

The protein resides in the cytoplasm. The enzyme catalyses cytidine(1402) in 16S rRNA + S-adenosyl-L-methionine = N(4)-methylcytidine(1402) in 16S rRNA + S-adenosyl-L-homocysteine + H(+). In terms of biological role, specifically methylates the N4 position of cytidine in position 1402 (C1402) of 16S rRNA. This Rhizobium etli (strain ATCC 51251 / DSM 11541 / JCM 21823 / NBRC 15573 / CFN 42) protein is Ribosomal RNA small subunit methyltransferase H.